We begin with the raw amino-acid sequence, 456 residues long: GTPase Der (456 aa).

EngA-type G domains lie at 4 to 169 and 177 to 352; these read PIVA…PAVE and IKVA…ESHK. Residues 10–17, 57–61, 120–123, 183–190, 230–234, and 295–298 each bind GTP; these read GRPNVGKS, DTGGL, NKCE, DTAGI, and NKWD. One can recognise a KH-like domain in the interval 353–438; the sequence is RRVSTSVINE…PIILLWRSKK (86 aa).

The protein belongs to the TRAFAC class TrmE-Era-EngA-EngB-Septin-like GTPase superfamily. EngA (Der) GTPase family. Associates with the 50S ribosomal subunit.

In terms of biological role, GTPase that plays an essential role in the late steps of ribosome biogenesis. This Nostoc punctiforme (strain ATCC 29133 / PCC 73102) protein is GTPase Der.